The primary structure comprises 454 residues: Chromosomal replication initiator protein DnaA (454 aa).

Residues M1–Y79 form a domain I, interacts with DnaA modulators region. The interval Y79–S117 is domain II. A domain III, AAA+ region region spans residues N118–S334. ATP contacts are provided by G162, G164, K165, and T166. The tract at residues R335–K454 is domain IV, binds dsDNA.

It belongs to the DnaA family. As to quaternary structure, oligomerizes as a right-handed, spiral filament on DNA at oriC.

It is found in the cytoplasm. Plays an essential role in the initiation and regulation of chromosomal replication. ATP-DnaA binds to the origin of replication (oriC) to initiate formation of the DNA replication initiation complex once per cell cycle. Binds the DnaA box (a 9 base pair repeat at the origin) and separates the double-stranded (ds)DNA. Forms a right-handed helical filament on oriC DNA; dsDNA binds to the exterior of the filament while single-stranded (ss)DNA is stabiized in the filament's interior. The ATP-DnaA-oriC complex binds and stabilizes one strand of the AT-rich DNA unwinding element (DUE), permitting loading of DNA polymerase. After initiation quickly degrades to an ADP-DnaA complex that is not apt for DNA replication. Binds acidic phospholipids. The chain is Chromosomal replication initiator protein DnaA from Buchnera aphidicola subsp. Acyrthosiphon pisum (strain 5A).